A 311-amino-acid chain; its full sequence is Aquaporin-1 (311 aa).

Over methionine 1–leucine 16 the chain is Cytoplasmic. Residues alanine 17–isoleucine 37 traverse the membrane as a helical segment. The Extracellular segment spans residues glutamine 38 to glutamate 56. A helical transmembrane segment spans residues histidine 57–phenylalanine 77. A topological domain (cytoplasmic) is located at residue arginine 78. A helical membrane pass occupies residues valine 79 to lysine 99. An NPA 1 motif is present at residues asparagine 85 to asparagine 87. Position 100 (proline 100) is a topological domain, extracellular. A helical membrane pass occupies residues leucine 101–valine 121. Topologically, residues arginine 122–glutamine 143 are cytoplasmic. Residues glycine 144–alanine 164 form a helical membrane-spanning segment. The Extracellular portion of the chain corresponds to glutamate 165 to glutamate 168. The helical transmembrane segment at alanine 169 to valine 189 threads the bilayer. Residues tyrosine 190–histidine 215 lie on the Cytoplasmic side of the membrane. The NPA 2 motif lies at asparagine 197 to alanine 199. Residues tryptophan 216–leucine 236 form a helical membrane-spanning segment. Over lysine 237–valine 311 the chain is Extracellular. Residues aspartate 276–valine 311 form a disordered region. A compositionally biased stretch (basic and acidic residues) spans glutamate 288 to serine 298. Over residues serine 299–valine 311 the composition is skewed to polar residues. A glycan (N-linked (GlcNAc...) asparagine) is linked at asparagine 300.

The protein belongs to the MIP/aquaporin (TC 1.A.8) family.

The protein resides in the cell membrane. The catalysed reaction is H2O(in) = H2O(out). It carries out the reaction H2O2(out) = H2O2(in). It catalyses the reaction nitric oxide(out) = nitric oxide(in). The enzyme catalyses CO2(out) = CO2(in). Its function is as follows. Water channel required to facilitate the transport of water across membranes. Also mediates the transport nitric oxide, hydrogen peroxide and carbon dioxide across the membrane. Required for Hartig net development in trembling aspen trees. Contributes in fungal cellular processes during the basidiocarp formation. The chain is Aquaporin-1 from Laccaria bicolor (Bicoloured deceiver).